Reading from the N-terminus, the 417-residue chain is Mitochondrial inner membrane i-AAA protease supercomplex subunit MGR1 (417 aa).

The interval 1–28 (MAVFTPPSGNSNSTDHTHTQDDHDKDDN) is disordered. Residues 1–56 (MAVFTPPSGNSNSTDHTHTQDDHDKDDNDIKKFYIRPSLGLKLWGPLVPAPDNLPG) lie on the Mitochondrial intermembrane side of the membrane. Basic and acidic residues predominate over residues 15–28 (DHTHTQDDHDKDDN). Residues 57–73 (LYTLITIQSAVGFFALW) form a helical membrane-spanning segment. At 74 to 151 (RLRRLYKLPP…RQSRFVSVRK (78 aa)) the chain is on the mitochondrial matrix side. A helical membrane pass occupies residues 152 to 169 (LLWGLFGSLLLSQSLLEL). Residues 170 to 417 (TRLNFLKYDP…PKALTNEKTH (248 aa)) lie on the Mitochondrial intermembrane side of the membrane. The span at 391–401 (SHTKTPTSTDQ) shows a compositional bias: polar residues. The segment at 391 to 417 (SHTKTPTSTDQPLPGPTPKALTNEKTH) is disordered.

The protein belongs to the MGR1 family. In terms of assembly, component of the mitochondrial inner membrane i-AAA protease supercomplex composed of MGR1, MGR3 and YME1. With MGR3, forms a subcomplex that binds to YME1 and to substrates to facilitate proteolysis. Interacts directly with YME1.

It is found in the mitochondrion inner membrane. Its function is as follows. Component of the mitochondrial inner membrane i-AAA protease supercomplex required for mitochondrial inner membrane protein turnover. Together with MGR3, functions in an adapter complex that targets substrates to the i-AAA protease for degradation. Required for growth of cells lacking the mitochondrial genome. The chain is Mitochondrial inner membrane i-AAA protease supercomplex subunit MGR1 (MGR1) from Saccharomyces cerevisiae (strain ATCC 204508 / S288c) (Baker's yeast).